The chain runs to 56 residues: Small ribosomal subunit protein uS14 (56 aa).

Zn(2+)-binding residues include Cys21, Cys24, Cys39, and Cys42.

The protein belongs to the universal ribosomal protein uS14 family. In terms of assembly, component of the 40S small ribosomal subunit. It depends on Zn(2+) as a cofactor.

It localises to the cytoplasm. Its subcellular location is the cytosol. The protein localises to the rough endoplasmic reticulum. The sequence is that of Small ribosomal subunit protein uS14 (RpS29) from Ixodes scapularis (Black-legged tick).